A 246-amino-acid polypeptide reads, in one-letter code: uncharacterized protein (246 aa).

Position 10 to 34 (10 to 34 (VITGASSGIGEETVNLLSENGAKLV)) interacts with NADP(+). Ser-140 contacts substrate. The Proton acceptor role is filled by Tyr-153.

This sequence belongs to the short-chain dehydrogenases/reductases (SDR) family.

This is an uncharacterized protein from Staphylococcus saprophyticus subsp. saprophyticus (strain ATCC 15305 / DSM 20229 / NCIMB 8711 / NCTC 7292 / S-41).